Here is a 221-residue protein sequence, read N- to C-terminus: Translation initiation factor 6 (221 aa).

The protein belongs to the eIF-6 family.

Its function is as follows. Binds to the 50S ribosomal subunit and prevents its association with the 30S ribosomal subunit to form the 70S initiation complex. The polypeptide is Translation initiation factor 6 (Methanospirillum hungatei JF-1 (strain ATCC 27890 / DSM 864 / NBRC 100397 / JF-1)).